The chain runs to 180 residues: Small ribosomal subunit protein uS4 (180 aa).

Residues 103–174 (RRLQTIVYKK…HPERMMIEKA (72 aa)) enclose the S4 RNA-binding domain.

It belongs to the universal ribosomal protein uS4 family. In terms of assembly, part of the 30S ribosomal subunit. Contacts protein S5. The interaction surface between S4 and S5 is involved in control of translational fidelity.

One of the primary rRNA binding proteins, it binds directly to 16S rRNA where it nucleates assembly of the body of the 30S subunit. Functionally, with S5 and S12 plays an important role in translational accuracy. In Pyrococcus abyssi (strain GE5 / Orsay), this protein is Small ribosomal subunit protein uS4.